The sequence spans 500 residues: Serine/threonine-protein phosphatase 2A 56 kDa regulatory subunit beta isoform (500 aa).

Residues 1-19 (METKLPPASTPTSPSSPGL) are compositionally biased toward low complexity. Disordered stretches follow at residues 1–55 (METK…YQSN) and 474–500 (GTQG…GGQS). 6 positions are modified to phosphoserine; by CLK2: S32, S35, S44, S46, S47, and S48. The segment covering 34 to 45 (RSLRRARPRRSH) has biased composition (basic residues).

The protein belongs to the phosphatase 2A regulatory subunit B56 family. As to quaternary structure, component of the serine/threonine-protein phosphatase 2A complex (PP2A). This complex consists of a common heterodimeric core enzyme, composed of a 36 kDa catalytic subunit (subunit C) and a 65 kDa constant scaffold subunit (PR65 or subunit A), that associates with a variety of regulatory subunits. Proteins that associate with the core dimer include three families of regulatory subunits B (the R2/B/PR55/B55, R3/B''/PR72/PR130/PR59 and R5/B'/B56 families), the 48 kDa variable regulatory subunit, viral proteins, and cell signaling molecules. Interacts with SGO1. Interacts with AKT1. In terms of tissue distribution, highly expressed in brain.

It is found in the nucleus. As the regulatory component of the serine/threonine-protein phosphatase 2A (PP2A) holoenzyme, modulates substrate specificity, subcellular localization, and responsiveness to phosphorylation. The phosphorylated form mediates the interaction between PP2A and AKT1, leading to AKT1 dephosphorylation. The protein is Serine/threonine-protein phosphatase 2A 56 kDa regulatory subunit beta isoform (PPP2R5B) of Oryctolagus cuniculus (Rabbit).